The sequence spans 422 residues: Enolase (422 aa).

Serine 41 is a binding site for Mg(2+). A (2R)-2-phosphoglycerate-binding site is contributed by glutamate 163. Glutamate 204 (proton donor) is an active-site residue. Positions 241, 284, and 311 each coordinate Mg(2+). The active-site Proton acceptor is lysine 336. (2R)-2-phosphoglycerate is bound by residues arginine 365, serine 366, and lysine 387.

It belongs to the enolase family. Homodimer. Component of the RNA degradosome, a multiprotein complex involved in RNA processing and mRNA degradation. The cofactor is Mg(2+).

It is found in the cytoplasm. The protein resides in the secreted. It localises to the cell surface. The enzyme catalyses (2R)-2-phosphoglycerate = phosphoenolpyruvate + H2O. The protein operates within carbohydrate degradation; glycolysis; pyruvate from D-glyceraldehyde 3-phosphate: step 4/5. Catalyzes the reversible conversion of 2-phosphoglycerate (2-PG) into phosphoenolpyruvate (PEP). It is essential for the degradation of carbohydrates via glycolysis. The protein is Enolase of Legionella pneumophila subsp. pneumophila (strain Philadelphia 1 / ATCC 33152 / DSM 7513).